A 138-amino-acid polypeptide reads, in one-letter code: Transcription factor Atoh7-a (138 aa).

The region spanning 33-85 (KRRLAANARERRRMQGLNTAFDSLRKVVPQWGEDKQLSKYETLQMALSYIMAL) is the bHLH domain.

It localises to the nucleus. The protein resides in the perikaryon. Its subcellular location is the cell projection. It is found in the axon. Functionally, transcription factor that binds to DNA at the consensus sequence 5'-CAG[GC]TG-3'. Positively regulates the determination of retinal ganglion cell fate and formation of the optic nerve and retino-hypothalamic tract. Required for retinal circadian rhythm photoentrainment. Plays a role in brainstem auditory signaling and binaural processing. Regulates the differentiation of olfactory receptor neurons. During retinal neurogenesis, activates the transcription of several genes such as brn3d, coe3, cbfa2t2, glis2, elrC and xgadd45-gamma. This is Transcription factor Atoh7-a from Xenopus laevis (African clawed frog).